A 307-amino-acid chain; its full sequence is MSQIIDVPETLSLAIDSFLSYIEVERRLSPVTVENYQRQLMTIAQMMVAIKINQWSLLESQHVRMLLAKSHRSGLQPASLALRFSALRSFLDWQVSQGMLAVNPAKGVRTPKSGRHLPKNMDVDEVSQLMNIDLKDPLSVRDRTMLEVMYGAGLRLSELTNLNINDIDLQEGEVRVLGKGSKERKVPLGRKAVEWLQHWFAMRELYSPEDTAVFISTKSGKRLSVRSVQKRFELWGVKQGLSSHVNPHKLRHSFATHLLESSGDLRAVQELLGHANLSTTQVYTHLDFQHLAKVYDAAHPRAKREKS.

Positions 9–95 constitute a Core-binding (CB) domain; sequence ETLSLAIDSF…ALRSFLDWQV (87 aa). The Tyr recombinase domain maps to 116 to 296; the sequence is HLPKNMDVDE…DFQHLAKVYD (181 aa). Catalysis depends on residues R155, K179, H248, R251, and H274. The O-(3'-phospho-DNA)-tyrosine intermediate role is filled by Y283.

The protein belongs to the 'phage' integrase family. XerC subfamily. Forms a cyclic heterotetrameric complex composed of two molecules of XerC and two molecules of XerD, in which XerC interacts with XerD via its C-terminal region, XerD interacts with XerC via its C-terminal region and so on.

The protein resides in the cytoplasm. FtsK may regulate the catalytic switch between XerC and XerD in the heterotetrameric complex during the two steps of the recombination process. Functionally, site-specific tyrosine recombinase, which acts by catalyzing the cutting and rejoining of the recombining DNA molecules. Binds cooperatively to specific DNA consensus sequences that are separated from XerD binding sites by a short central region, forming the heterotetrameric XerC-XerD complex that recombines DNA substrates. The complex is essential to convert dimers of the bacterial chromosome into monomers to permit their segregation at cell division. It also contributes to the segregational stability of plasmids. In the complex XerC specifically exchanges the top DNA strands. The protein is Tyrosine recombinase XerC of Proteus mirabilis.